A 304-amino-acid chain; its full sequence is Acetylglutamate kinase (304 aa).

Residues 70–71 (GG), arginine 92, and asparagine 196 contribute to the substrate site.

The protein belongs to the acetylglutamate kinase family. ArgB subfamily.

It is found in the cytoplasm. It carries out the reaction N-acetyl-L-glutamate + ATP = N-acetyl-L-glutamyl 5-phosphate + ADP. It functions in the pathway amino-acid biosynthesis; L-arginine biosynthesis; N(2)-acetyl-L-ornithine from L-glutamate: step 2/4. Catalyzes the ATP-dependent phosphorylation of N-acetyl-L-glutamate. In Methanococcoides burtonii (strain DSM 6242 / NBRC 107633 / OCM 468 / ACE-M), this protein is Acetylglutamate kinase.